A 312-amino-acid chain; its full sequence is Ribonuclease Z (312 aa).

Positions 62, 64, 66, 67, 144, 215, and 273 each coordinate Zn(2+). The Proton acceptor role is filled by Asp66.

This sequence belongs to the RNase Z family. In terms of assembly, homodimer. Zn(2+) is required as a cofactor.

It carries out the reaction Endonucleolytic cleavage of RNA, removing extra 3' nucleotides from tRNA precursor, generating 3' termini of tRNAs. A 3'-hydroxy group is left at the tRNA terminus and a 5'-phosphoryl group is left at the trailer molecule.. In terms of biological role, zinc phosphodiesterase, which displays some tRNA 3'-processing endonuclease activity. Probably involved in tRNA maturation, by removing a 3'-trailer from precursor tRNA. The sequence is that of Ribonuclease Z from Prochlorococcus marinus (strain MIT 9215).